Consider the following 196-residue polypeptide: Peptidyl-tRNA hydrolase (196 aa).

Residue Y18 participates in tRNA binding. H23 acts as the Proton acceptor in catalysis. TRNA contacts are provided by F69, N71, and N117.

Belongs to the PTH family. As to quaternary structure, monomer.

The protein resides in the cytoplasm. It catalyses the reaction an N-acyl-L-alpha-aminoacyl-tRNA + H2O = an N-acyl-L-amino acid + a tRNA + H(+). Hydrolyzes ribosome-free peptidyl-tRNAs (with 1 or more amino acids incorporated), which drop off the ribosome during protein synthesis, or as a result of ribosome stalling. Functionally, catalyzes the release of premature peptidyl moieties from peptidyl-tRNA molecules trapped in stalled 50S ribosomal subunits, and thus maintains levels of free tRNAs and 50S ribosomes. This chain is Peptidyl-tRNA hydrolase, found in Vibrio campbellii (strain ATCC BAA-1116).